Here is an 827-residue protein sequence, read N- to C-terminus: Leucine--tRNA ligase (827 aa).

The 'HIGH' region signature appears at 42-52 (PYPSGNLHMGH). The short motif at 583–587 (KMSKS) is the 'KMSKS' region element. Lys-586 is an ATP binding site.

The protein belongs to the class-I aminoacyl-tRNA synthetase family.

Its subcellular location is the cytoplasm. It catalyses the reaction tRNA(Leu) + L-leucine + ATP = L-leucyl-tRNA(Leu) + AMP + diphosphate. This is Leucine--tRNA ligase from Desulfitobacterium hafniense (strain DSM 10664 / DCB-2).